Consider the following 123-residue polypeptide: UPF0102 protein DR_2282 (123 aa).

Belongs to the UPF0102 family.

This Deinococcus radiodurans (strain ATCC 13939 / DSM 20539 / JCM 16871 / CCUG 27074 / LMG 4051 / NBRC 15346 / NCIMB 9279 / VKM B-1422 / R1) protein is UPF0102 protein DR_2282.